The chain runs to 56 residues: uncharacterized protein (56 aa).

A helical transmembrane segment spans residues 6 to 26 (MLLIMLYMVLVVNDLILYNIL).

It is found in the membrane. This is an uncharacterized protein from Dictyostelium discoideum (Social amoeba).